A 237-amino-acid chain; its full sequence is Ribitol-5-phosphate cytidylyltransferase (237 aa).

CTP is bound by residues 7–10 (LAGG) and 80–86 (GEDRNET).

This sequence belongs to the IspD/TarI cytidylyltransferase family. TarI subfamily.

It catalyses the reaction D-ribitol 5-phosphate + CTP + H(+) = CDP-L-ribitol + diphosphate. It functions in the pathway cell wall biogenesis; poly(ribitol phosphate) teichoic acid biosynthesis. Catalyzes the transfer of the cytidylyl group of CTP to D-ribitol 5-phosphate. In Listeria monocytogenes serotype 4b (strain F2365), this protein is Ribitol-5-phosphate cytidylyltransferase.